A 335-amino-acid polypeptide reads, in one-letter code: DDRGK domain-containing protein 1 (335 aa).

At 1 to 6 (MGDTYS) the chain is on the lumenal side. A helical transmembrane segment spans residues 7-27 (LVLVAGYLSIFLFIGAIGYFY). The Cytoplasmic portion of the chain corresponds to 28–335 (LSKPRIPSSN…NNDQDPVDTN (308 aa)). Residues 37-124 (NVNEQQQQQQ…GEDIGVVAPG (88 aa)) are disordered. 2 stretches are compositionally biased toward low complexity: residues 41-56 (QQQQQQQQQQQQQQPQ) and 91-103 (SSGSDSDNSTNSD). Residues 104–117 (NYDDDNGQEGEGED) are compositionally biased toward acidic residues.

The protein belongs to the DDRGK1 family.

It localises to the endoplasmic reticulum membrane. Functionally, substrate adapter for ufmylation, the covalent attachment of the ubiquitin-like modifier UFM1 to substrate proteins. This chain is DDRGK domain-containing protein 1, found in Dictyostelium discoideum (Social amoeba).